The primary structure comprises 599 residues: Putative sensor histidine kinase NtrY-like (599 aa).

A run of 4 helical transmembrane segments spans residues valine 17–isoleucine 37, phenylalanine 44–leucine 64, isoleucine 85–valine 105, and isoleucine 285–phenylalanine 305. The 55-residue stretch at alanine 307–arginine 361 folds into the HAMP domain. The Histidine kinase domain maps to lysine 378–lysine 589. Histidine 381 carries the phosphohistidine; by autocatalysis modification.

It is found in the cell membrane. The catalysed reaction is ATP + protein L-histidine = ADP + protein N-phospho-L-histidine.. Its function is as follows. Member of the two-component regulatory system RF_0427/RF_0895. In Rickettsia felis (strain ATCC VR-1525 / URRWXCal2) (Rickettsia azadi), this protein is Putative sensor histidine kinase NtrY-like.